The chain runs to 314 residues: DNA-directed RNA polymerase subunit alpha (314 aa).

Positions 1–228 (MIEIEKPKIE…EHLNIFVGLT (228 aa)) are alpha N-terminal domain (alpha-NTD). Positions 245 to 314 (KEKVLEMTIE…ELGLSLRKDD (70 aa)) are alpha C-terminal domain (alpha-CTD).

It belongs to the RNA polymerase alpha chain family. Homodimer. The RNAP catalytic core consists of 2 alpha, 1 beta, 1 beta' and 1 omega subunit. When a sigma factor is associated with the core the holoenzyme is formed, which can initiate transcription.

It carries out the reaction RNA(n) + a ribonucleoside 5'-triphosphate = RNA(n+1) + diphosphate. In terms of biological role, DNA-dependent RNA polymerase catalyzes the transcription of DNA into RNA using the four ribonucleoside triphosphates as substrates. This chain is DNA-directed RNA polymerase subunit alpha, found in Geobacillus thermodenitrificans (strain NG80-2).